The chain runs to 498 residues: L-proline--[L-prolyl-carrier protein] ligase (498 aa).

This sequence belongs to the ATP-dependent AMP-binding enzyme family.

The catalysed reaction is holo-[peptidyl-carrier protein] + L-proline + ATP = L-prolyl-[peptidyl-carrier protein] + AMP + diphosphate. Its function is as follows. Involved in the biosynthesis of pyoluteorin. Catalyzes the conversion of L-proline to L-prolyl-AMP and the transfer of the L-prolyl group to acyl carrier protein PltL. This chain is L-proline--[L-prolyl-carrier protein] ligase, found in Pseudomonas fluorescens (strain ATCC BAA-477 / NRRL B-23932 / Pf-5).